Reading from the N-terminus, the 90-residue chain is Small ribosomal subunit protein uS17 (90 aa).

Belongs to the universal ribosomal protein uS17 family. As to quaternary structure, part of the 30S ribosomal subunit.

Its function is as follows. One of the primary rRNA binding proteins, it binds specifically to the 5'-end of 16S ribosomal RNA. The polypeptide is Small ribosomal subunit protein uS17 (Burkholderia mallei (strain NCTC 10247)).